The primary structure comprises 427 residues: Adenylosuccinate synthetase (427 aa).

GTP contacts are provided by residues 12-18 (GDEGKGK) and 40-42 (GHT). Catalysis depends on aspartate 13, which acts as the Proton acceptor. Aspartate 13 and glycine 40 together coordinate Mg(2+). IMP-binding positions include 13–16 (DEGK), 38–41 (NAGH), threonine 128, arginine 142, glutamine 223, threonine 238, and arginine 302. Histidine 41 acts as the Proton donor in catalysis. 298–304 (TTTGRNR) provides a ligand contact to substrate. GTP-binding positions include arginine 304, 330 to 332 (KLD), and 412 to 414 (GVG).

The protein belongs to the adenylosuccinate synthetase family. As to quaternary structure, homodimer. Mg(2+) is required as a cofactor.

Its subcellular location is the cytoplasm. The catalysed reaction is IMP + L-aspartate + GTP = N(6)-(1,2-dicarboxyethyl)-AMP + GDP + phosphate + 2 H(+). It functions in the pathway purine metabolism; AMP biosynthesis via de novo pathway; AMP from IMP: step 1/2. Functionally, plays an important role in the de novo pathway of purine nucleotide biosynthesis. Catalyzes the first committed step in the biosynthesis of AMP from IMP. The polypeptide is Adenylosuccinate synthetase (Thermobifida fusca (strain YX)).